A 194-amino-acid chain; its full sequence is Acid tolerance regulatory protein ActR (194 aa).

Residues 24–138 form the Response regulatory domain; the sequence is SLLIVDDDTA…DILAALIQRP (115 aa). 4-aspartylphosphate is present on Asp-73.

In terms of processing, phosphorylated by ActS.

Member of the two-component regulatory system ActS/ActR acting in acid tolerance. These data implicate that a two-component sensor may be involved in pH sensing and/or response. The polypeptide is Acid tolerance regulatory protein ActR (actR) (Sinorhizobium medicae (strain WSM419) (Ensifer medicae)).